The primary structure comprises 396 residues: Acetate kinase (396 aa).

A Mg(2+)-binding site is contributed by Asn-7. ATP is bound at residue Lys-14. Arg-89 is a binding site for substrate. Catalysis depends on Asp-146, which acts as the Proton donor/acceptor. ATP contacts are provided by residues 206-210, 280-282, and 328-332; these read HLGNG, DLR, and GIGEN. Glu-382 is a Mg(2+) binding site.

It belongs to the acetokinase family. As to quaternary structure, homodimer. It depends on Mg(2+) as a cofactor. The cofactor is Mn(2+).

The protein localises to the cytoplasm. It carries out the reaction acetate + ATP = acetyl phosphate + ADP. It participates in metabolic intermediate biosynthesis; acetyl-CoA biosynthesis; acetyl-CoA from acetate: step 1/2. In terms of biological role, catalyzes the formation of acetyl phosphate from acetate and ATP. Can also catalyze the reverse reaction. This Maridesulfovibrio salexigens (strain ATCC 14822 / DSM 2638 / NCIMB 8403 / VKM B-1763) (Desulfovibrio salexigens) protein is Acetate kinase.